Reading from the N-terminus, the 110-residue chain is Nucleoid-associated protein Tola_2216 (110 aa).

Belongs to the YbaB/EbfC family. Homodimer.

The protein resides in the cytoplasm. It localises to the nucleoid. Functionally, binds to DNA and alters its conformation. May be involved in regulation of gene expression, nucleoid organization and DNA protection. The chain is Nucleoid-associated protein Tola_2216 from Tolumonas auensis (strain DSM 9187 / NBRC 110442 / TA 4).